The sequence spans 246 residues: Probable 2-phosphosulfolactate phosphatase (246 aa).

The protein belongs to the ComB family. Mg(2+) serves as cofactor.

It carries out the reaction (2R)-O-phospho-3-sulfolactate + H2O = (2R)-3-sulfolactate + phosphate. The sequence is that of Probable 2-phosphosulfolactate phosphatase from Nostoc punctiforme (strain ATCC 29133 / PCC 73102).